We begin with the raw amino-acid sequence, 103 residues long: uncharacterized protein (103 aa).

The helical transmembrane segment at 35 to 57 (PFVSMFQTFLEVLTATVLAFTAY) threads the bilayer.

It is found in the host membrane. This is an uncharacterized protein from Acidianus bottle-shaped virus (isolate Italy/Pozzuoli) (ABV).